A 54-amino-acid chain; its full sequence is Large ribosomal subunit protein bL33 (54 aa).

It belongs to the bacterial ribosomal protein bL33 family.

This is Large ribosomal subunit protein bL33 from Xylella fastidiosa (strain M23).